Reading from the N-terminus, the 1097-residue chain is Protease Do-like 7 (1097 aa).

Positions 55-243 are serine protease; the sequence is VLRTTACRAF…LPLQRVVRAL (189 aa). The 98-residue stretch at 269-366 folds into the PDZ domain; that stretch reads MTFLHKGFDE…RGGQPLSVSV (98 aa). Histidine 524 (charge relay system) is an active-site residue. A compositionally biased stretch (polar residues) spans 546–556; the sequence is TSSGDGSQNDF. The disordered stretch occupies residues 546–577; it reads TSSGDGSQNDFGSEAKKQRVDEDSSDGIAANG. The segment covering 558-567 has biased composition (basic and acidic residues); that stretch reads SEAKKQRVDE. The active-site Charge relay system is the serine 785.

Belongs to the peptidase S1C family.

Its subcellular location is the cytoplasm. In terms of biological role, probable serine protease. The sequence is that of Protease Do-like 7 (DEGP7) from Arabidopsis thaliana (Mouse-ear cress).